Consider the following 78-residue polypeptide: MSRVCQVTGKGPVTGNNISHANNKTRRRFLPNLQHHRFWVESENRFVRLRVSAKGMRVIDKRGIDVVLAELRARGEKF.

Positions Met1–His20 are disordered.

This sequence belongs to the bacterial ribosomal protein bL28 family.

The chain is Large ribosomal subunit protein bL28 from Pseudomonas putida (strain W619).